Here is a 199-residue protein sequence, read N- to C-terminus: Desiccation stress protein DSP-22, chloroplastic (199 aa).

A chloroplast-targeting transit peptide spans 1–52; sequence MASSTCYATIPAMSCRGQSTITRFGPNNLFLGKQSYELPLMRRNAKFTVRSM. The span at 53-62 shows a compositional bias: basic and acidic residues; sequence REDNEKEEQQ. Positions 53 to 82 are disordered; that stretch reads REDNEKEEQQQQKQQQTHDGGPDLTPNRTE. Helical transmembrane passes span 130–152 and 172–191; these read FNGG…LIPI and IWNG…TEYV.

This sequence belongs to the ELIP/psbS family. In terms of tissue distribution, preferentially localized in the chloroplast-rich palisade parenchyma cells, in extracts of desiccated leaves, in seeds, but not in roots or untreated leaves.

It localises to the plastid. The protein resides in the chloroplast thylakoid membrane. Its function is as follows. Possibly exerts a protective role during water loss. This is Desiccation stress protein DSP-22, chloroplastic (DSP-22) from Craterostigma plantagineum (Blue gem).